Consider the following 208-residue polypeptide: 3-isopropylmalate dehydratase small subunit (208 aa).

The protein belongs to the LeuD family. LeuD type 1 subfamily. Heterodimer of LeuC and LeuD.

It catalyses the reaction (2R,3S)-3-isopropylmalate = (2S)-2-isopropylmalate. It functions in the pathway amino-acid biosynthesis; L-leucine biosynthesis; L-leucine from 3-methyl-2-oxobutanoate: step 2/4. Functionally, catalyzes the isomerization between 2-isopropylmalate and 3-isopropylmalate, via the formation of 2-isopropylmaleate. The chain is 3-isopropylmalate dehydratase small subunit from Granulibacter bethesdensis (strain ATCC BAA-1260 / CGDNIH1).